The following is a 383-amino-acid chain: L-aspartate/L-glutamate decarboxylase (383 aa).

Residue Lys-232 is modified to N6-(pyridoxal phosphate)lysine.

It belongs to the group II decarboxylase family. MfnA subfamily. In terms of assembly, monomer. It depends on pyridoxal 5'-phosphate as a cofactor.

The enzyme catalyses L-aspartate + H(+) = beta-alanine + CO2. The catalysed reaction is L-glutamate + H(+) = 4-aminobutanoate + CO2. It carries out the reaction L-cysteate + H(+) = taurine + CO2. It catalyses the reaction 3-sulfino-L-alanine + H(+) = hypotaurine + CO2. Its pathway is cofactor biosynthesis; coenzyme A biosynthesis. In terms of biological role, catalyzes the decarboxylation of L-aspartate to produce beta-alanine, and the decarboxylation of L-glutamate to produce 4-aminobutanoate. Can also use cysteate and, to a lesser extent, cysteine sulfite (3-sulfino-L-alanine), but not L-tyrosine. Specific activities toward L-aspartate and cysteate are higher than toward L-glutamate. The sequence is that of L-aspartate/L-glutamate decarboxylase from Pyrococcus horikoshii (strain ATCC 700860 / DSM 12428 / JCM 9974 / NBRC 100139 / OT-3).